We begin with the raw amino-acid sequence, 275 residues long: Formamidopyrimidine-DNA glycosylase (275 aa).

The active-site Schiff-base intermediate with DNA is the Pro-2. The active-site Proton donor is the Glu-3. The Proton donor; for beta-elimination activity role is filled by Lys-58. His-93, Arg-111, and Arg-156 together coordinate DNA. Residues 241-275 (FVYDRAGLPCRVCGTPIRQIVQGQRSTYFCPTCQR) form an FPG-type zinc finger. Catalysis depends on Arg-265, which acts as the Proton donor; for delta-elimination activity.

The protein belongs to the FPG family. Monomer. Zn(2+) serves as cofactor.

It catalyses the reaction Hydrolysis of DNA containing ring-opened 7-methylguanine residues, releasing 2,6-diamino-4-hydroxy-5-(N-methyl)formamidopyrimidine.. It carries out the reaction 2'-deoxyribonucleotide-(2'-deoxyribose 5'-phosphate)-2'-deoxyribonucleotide-DNA = a 3'-end 2'-deoxyribonucleotide-(2,3-dehydro-2,3-deoxyribose 5'-phosphate)-DNA + a 5'-end 5'-phospho-2'-deoxyribonucleoside-DNA + H(+). Involved in base excision repair of DNA damaged by oxidation or by mutagenic agents. Acts as a DNA glycosylase that recognizes and removes damaged bases. Has a preference for oxidized purines, such as 7,8-dihydro-8-oxoguanine (8-oxoG). Has AP (apurinic/apyrimidinic) lyase activity and introduces nicks in the DNA strand. Cleaves the DNA backbone by beta-delta elimination to generate a single-strand break at the site of the removed base with both 3'- and 5'-phosphates. This is Formamidopyrimidine-DNA glycosylase from Burkholderia ambifaria (strain MC40-6).